The following is an 832-amino-acid chain: SID1 transmembrane family member 2 (832 aa).

The first 15 residues, Met-1–Ala-15, serve as a signal peptide directing secretion. Residues Val-16–Tyr-293 lie on the Extracellular side of the membrane. N-linked (GlcNAc...) asparagine glycosylation is found at Asn-27, Asn-54, Asn-60, Asn-123, Asn-141, and Asn-165. The helical transmembrane segment at Val-294–Leu-314 threads the bilayer. Residues Ala-315–Gln-447 are Cytoplasmic-facing. 3 positions are modified to phosphoserine: Ser-401, Ser-403, and Ser-404. A helical transmembrane segment spans residues Ile-448–Val-468. The Extracellular portion of the chain corresponds to Ile-469 to Ala-499. N-linked (GlcNAc...) asparagine glycans are attached at residues Asn-476 and Asn-496. The helical transmembrane segment at Phe-500–Ile-520 threads the bilayer. At Leu-521–His-546 the chain is on the cytoplasmic side. A helical transmembrane segment spans residues Phe-547 to Tyr-567. The Extracellular segment spans residues His-568–Ser-605. N-linked (GlcNAc...) asparagine glycosylation is found at Asn-572 and Asn-603. A helical transmembrane segment spans residues Ala-606–Phe-626. Topologically, residues Gly-627–Thr-631 are cytoplasmic. The chain crosses the membrane as a helical span at residues Ala-632–Leu-652. The Extracellular portion of the chain corresponds to Tyr-653 to Arg-688. A helical transmembrane segment spans residues Met-689–Met-709. The Cytoplasmic segment spans residues Arg-710–Ala-715. Residues Ser-716–Met-736 form a helical membrane-spanning segment. Topologically, residues Lys-737–Leu-746 are extracellular. The helical transmembrane segment at Ile-747–Phe-767 threads the bilayer. The Cytoplasmic portion of the chain corresponds to Gln-768–His-796. The helical transmembrane segment at Asp-797 to Leu-817 threads the bilayer. Over Asp-818 to Phe-832 the chain is Extracellular.

It belongs to the SID1 family. In terms of assembly, interacts with adapter protein complex 1 (AP-1) and AP-2, but not AP-3 and AP-4. Interacts with LAMP2. Glycosylated. Highly expressed in the liver, brain, kidney and intestine (at protein level).

Its subcellular location is the lysosome membrane. It localises to the cell membrane. In terms of biological role, mediates the translocation of RNA and DNA across the lysosomal membrane during RNA and DNA autophagy (RDA), a process in which RNA or DNA is directly imported into lysosomes in an ATP-dependent manner, and degraded. Involved in the uptake of single-stranded oligonucleotides by living cells, a process called gymnosis. In vitro, mediates the uptake of linear DNA more efficiently than that of circular DNA, but exhibits similar uptake efficacy toward RNA and DNA. Binds long double-stranded RNA (dsRNA) (500 - 700 base pairs), but not dsRNA shorter than 100 bp. The chain is SID1 transmembrane family member 2 (Sidt2) from Rattus norvegicus (Rat).